Consider the following 223-residue polypeptide: MNRIIPPENLPELLERAHMMAGVSLAQIAAQRGLNVPKDLKRDKGWVGQLIEMELGATAGSKPEQDFLHLGVELKTIPIDSQGRPLETTYVCVAPLSNIQGLTWQNSLVCHKLQRVLWVPVEGERHIPVGERRIGTPILWEPDPQELQLLQQDWEEIMELIALGKVEKLTARHGEVLQLRPKAANSKALTQSIAEDGSLKMTNPRGFYLKTSFTAMILNKVFG.

The protein belongs to the MutH family.

The protein resides in the cytoplasm. Sequence-specific endonuclease that cleaves unmethylated GATC sequences. It is involved in DNA mismatch repair. This Shewanella baltica (strain OS195) protein is DNA mismatch repair protein MutH.